The chain runs to 670 residues: MSLKSLEKETELPFDEYVLNDKWRHKYTPIDTYFKFHQQAIENLESFWESVAKELEWFKPWDKVLDASNPPFYKWFVGGRLNLSYLAVDRHVKTWRKNKLAIEWEGEPLDESGYPIDRRKLTYYDLFREVNRVACMLKCNFGVKKGDRVTLYLPMVPELPITMLAAWRIGAITNVVFSGFSADALAERINDSQSRIVITADGFWRRGKVVRLKEVVDSALEKAPGVENVIVLPRLGLKDVPMTEGRDFWWNRLMQGIPPNTYIEPEPVESEHPSFILYTSGTTGKPKGIVHDTGGWAVHVYATMKWVFDIRDDDIYWCTADIGWVTGHSYVVLGPLLMGTTEIIYEGAPDYPQPDRWWSIIERYGVTILYTSPTAIRMFMRYGEAWPGKHDLSTLRIIHSVGEPINPEAWRWAYRVLGNEKVAFGSTWWMTETGGIVISHAPGLYLVPMKPGTNGPPLPGFEVDVVDENGNPVPPGVKGYLVIKKPWPGMLHGIWGDPERYVKTYWSRFPGMFYVGDYAIKDKDGYIWVLGRADEVIKVAGHRLGTYELESAFVAHPAVAEAAVVGVPDAIKGEVPIAFVVLKQGVTPTEELRKELREHIRKSIGPIAEPAQIFFVTKLPKTRSGKIMRRLLKAVATGAPLGDVTTLEDETSVEEAKKAYEELKAEMAGP.

CoA-binding positions include 205–208 (RRGK) and Thr326. Residues 402 to 404 (GEP), 426 to 431 (STWWMT), Asp517, Arg532, and Arg543 contribute to the ATP site. Positions 554, 556, and 559 each coordinate Mg(2+). CoA is bound at residue Arg601. Residue Lys626 is modified to N6-acetyllysine.

The protein belongs to the ATP-dependent AMP-binding enzyme family. Mg(2+) serves as cofactor. Post-translationally, acetylated. Deacetylation by the SIR2-homolog deacetylase activates the enzyme.

It carries out the reaction acetate + ATP + CoA = acetyl-CoA + AMP + diphosphate. Its function is as follows. Catalyzes the conversion of acetate into acetyl-CoA (AcCoA), an essential intermediate at the junction of anabolic and catabolic pathways. AcsA undergoes a two-step reaction. In the first half reaction, AcsA combines acetate with ATP to form acetyl-adenylate (AcAMP) intermediate. In the second half reaction, it can then transfer the acetyl group from AcAMP to the sulfhydryl group of CoA, forming the product AcCoA. The sequence is that of Acetyl-coenzyme A synthetase from Pyrobaculum arsenaticum (strain DSM 13514 / JCM 11321 / PZ6).